Consider the following 322-residue polypeptide: Adenine deaminase (322 aa).

Zn(2+)-binding residues include histidine 11, histidine 13, and histidine 189. The Proton donor role is filled by glutamate 192. Position 270 (aspartate 270) interacts with Zn(2+). A substrate-binding site is contributed by aspartate 271.

This sequence belongs to the metallo-dependent hydrolases superfamily. Adenosine and AMP deaminases family. Adenine deaminase type 2 subfamily. It depends on Zn(2+) as a cofactor.

The enzyme catalyses adenine + H2O + H(+) = hypoxanthine + NH4(+). In terms of biological role, catalyzes the hydrolytic deamination of adenine to hypoxanthine. Plays an important role in the purine salvage pathway and in nitrogen catabolism. This chain is Adenine deaminase, found in Rhizobium johnstonii (strain DSM 114642 / LMG 32736 / 3841) (Rhizobium leguminosarum bv. viciae).